The sequence spans 154 residues: Major allergen Api g 1, isoallergen 1 (154 aa).

This sequence belongs to the BetVI family.

The polypeptide is Major allergen Api g 1, isoallergen 1 (Apium graveolens (Celery)).